Reading from the N-terminus, the 92-residue chain is Large ribosomal subunit protein bL36m (92 aa).

Residues 1-54 (MASLGRKFFAVGVLSRVFPSAFNAQKGLLKNASMFLTPAFRLSPSLLPWNFSRG) constitute a mitochondrion transit peptide.

It belongs to the bacterial ribosomal protein bL36 family. In terms of assembly, component of the mitochondrial large ribosomal subunit (mt-LSU). Mature yeast 74S mitochondrial ribosomes consist of a small (37S) and a large (54S) subunit. The 37S small subunit contains a 15S ribosomal RNA (15S mt-rRNA) and at least 32 different proteins. The 54S large subunit contains a 21S rRNA (21S mt-rRNA) and at least 45 different proteins. bL36m has a zinc binding site.

The protein resides in the mitochondrion. Component of the mitochondrial ribosome (mitoribosome), a dedicated translation machinery responsible for the synthesis of mitochondrial genome-encoded proteins, including at least some of the essential transmembrane subunits of the mitochondrial respiratory chain. The mitoribosomes are attached to the mitochondrial inner membrane and translation products are cotranslationally integrated into the membrane. bL36m may be involved in a process influencing telomere capping. This Schizosaccharomyces pombe (strain 972 / ATCC 24843) (Fission yeast) protein is Large ribosomal subunit protein bL36m (rtc6).